The primary structure comprises 105 residues: Large ribosomal subunit protein uL24 (105 aa).

The protein belongs to the universal ribosomal protein uL24 family. As to quaternary structure, part of the 50S ribosomal subunit.

One of two assembly initiator proteins, it binds directly to the 5'-end of the 23S rRNA, where it nucleates assembly of the 50S subunit. Functionally, one of the proteins that surrounds the polypeptide exit tunnel on the outside of the subunit. The sequence is that of Large ribosomal subunit protein uL24 from Wolbachia pipientis wMel.